We begin with the raw amino-acid sequence, 265 residues long: Phosphatidylglycerol--prolipoprotein diacylglyceryl transferase (265 aa).

The next 4 helical transmembrane spans lie at 10–30 (VAIA…LIGI), 56–76 (LVFW…VLFY), 87–107 (LILQ…GVLL), and 117–137 (GKGF…GLGA). Arginine 139 is an a 1,2-diacyl-sn-glycero-3-phospho-(1'-sn-glycerol) binding site. The next 3 helical transmembrane spans lie at 172 to 192 (PSQL…LWFY), 200 to 220 (MAVS…VEFV), and 227 to 247 (LGYL…PMIL).

Belongs to the Lgt family.

The protein resides in the cell inner membrane. It catalyses the reaction L-cysteinyl-[prolipoprotein] + a 1,2-diacyl-sn-glycero-3-phospho-(1'-sn-glycerol) = an S-1,2-diacyl-sn-glyceryl-L-cysteinyl-[prolipoprotein] + sn-glycerol 1-phosphate + H(+). The protein operates within protein modification; lipoprotein biosynthesis (diacylglyceryl transfer). In terms of biological role, catalyzes the transfer of the diacylglyceryl group from phosphatidylglycerol to the sulfhydryl group of the N-terminal cysteine of a prolipoprotein, the first step in the formation of mature lipoproteins. This Azotobacter vinelandii (strain DJ / ATCC BAA-1303) protein is Phosphatidylglycerol--prolipoprotein diacylglyceryl transferase.